An 86-amino-acid chain; its full sequence is Small ribosomal subunit protein bS20 (86 aa).

The disordered stretch occupies residues 1–22; that stretch reads MANIASARKRARQAEKNRQHNM.

Belongs to the bacterial ribosomal protein bS20 family.

Functionally, binds directly to 16S ribosomal RNA. The polypeptide is Small ribosomal subunit protein bS20 (Thioalkalivibrio sulfidiphilus (strain HL-EbGR7)).